A 54-amino-acid chain; its full sequence is Conotoxin vc5a (54 aa).

The first 14 residues, 1 to 14 (VILLLITSTPSVDA), serve as a signal peptide directing secretion. The propeptide occupies 15–42 (RLKAKDNMPLASFHDNAKRTLQTRLINT). Residue P49 is modified to 4-hydroxyproline. I53 carries the post-translational modification Isoleucine amide.

This sequence belongs to the conotoxin T superfamily. Contains 2 disulfide bonds that can be either 'C1-C3, C2-C4' or 'C1-C4, C2-C3', since these disulfide connectivities have been observed for conotoxins with cysteine framework V (for examples, see AC P0DQQ7 and AC P81755). As to expression, expressed by the venom duct.

It localises to the secreted. The polypeptide is Conotoxin vc5a (Conus victoriae (Queen Victoria cone)).